The chain runs to 288 residues: Acetyl-coenzyme A carboxylase carboxyl transferase subunit beta (288 aa).

The region spanning 34–288 (LFAKCPACKH…HLVSFHGGGQ (255 aa)) is the CoA carboxyltransferase N-terminal domain. Positions 38, 41, 56, and 59 each coordinate Zn(2+). The C4-type zinc-finger motif lies at 38–59 (CPACKHMIYKKDLGLAKICPTC).

Belongs to the AccD/PCCB family. As to quaternary structure, acetyl-CoA carboxylase is a heterohexamer composed of biotin carboxyl carrier protein (AccB), biotin carboxylase (AccC) and two subunits each of ACCase subunit alpha (AccA) and ACCase subunit beta (AccD). Zn(2+) is required as a cofactor.

It localises to the cytoplasm. It catalyses the reaction N(6)-carboxybiotinyl-L-lysyl-[protein] + acetyl-CoA = N(6)-biotinyl-L-lysyl-[protein] + malonyl-CoA. It functions in the pathway lipid metabolism; malonyl-CoA biosynthesis; malonyl-CoA from acetyl-CoA: step 1/1. Its function is as follows. Component of the acetyl coenzyme A carboxylase (ACC) complex. Biotin carboxylase (BC) catalyzes the carboxylation of biotin on its carrier protein (BCCP) and then the CO(2) group is transferred by the transcarboxylase to acetyl-CoA to form malonyl-CoA. This is Acetyl-coenzyme A carboxylase carboxyl transferase subunit beta from Streptococcus pyogenes serotype M49 (strain NZ131).